A 423-amino-acid chain; its full sequence is Serine--tRNA ligase (423 aa).

231–233 contacts L-serine; it reads TAE. 262 to 264 is an ATP binding site; the sequence is RSE. Glu285 is a binding site for L-serine. 349-352 contributes to the ATP binding site; the sequence is EISS. Ser384 is an L-serine binding site.

It belongs to the class-II aminoacyl-tRNA synthetase family. Type-1 seryl-tRNA synthetase subfamily. As to quaternary structure, homodimer. The tRNA molecule binds across the dimer.

It is found in the cytoplasm. It catalyses the reaction tRNA(Ser) + L-serine + ATP = L-seryl-tRNA(Ser) + AMP + diphosphate + H(+). The enzyme catalyses tRNA(Sec) + L-serine + ATP = L-seryl-tRNA(Sec) + AMP + diphosphate + H(+). It participates in aminoacyl-tRNA biosynthesis; selenocysteinyl-tRNA(Sec) biosynthesis; L-seryl-tRNA(Sec) from L-serine and tRNA(Sec): step 1/1. Functionally, catalyzes the attachment of serine to tRNA(Ser). Is also able to aminoacylate tRNA(Sec) with serine, to form the misacylated tRNA L-seryl-tRNA(Sec), which will be further converted into selenocysteinyl-tRNA(Sec). In Acinetobacter baumannii (strain AB307-0294), this protein is Serine--tRNA ligase.